The sequence spans 282 residues: Biotin synthase (282 aa).

One can recognise a Radical SAM core domain in the interval 1 to 228 (MQEIFLCSIS…NARLMVAGGR (228 aa)). Cys-17, Cys-21, and Cys-24 together coordinate [4Fe-4S] cluster. [2Fe-2S] cluster-binding residues include Cys-61, Cys-96, Cys-154, and Arg-221.

The protein belongs to the radical SAM superfamily. Biotin synthase family. In terms of assembly, homodimer. Requires [4Fe-4S] cluster as cofactor. It depends on [2Fe-2S] cluster as a cofactor.

The enzyme catalyses (4R,5S)-dethiobiotin + (sulfur carrier)-SH + 2 reduced [2Fe-2S]-[ferredoxin] + 2 S-adenosyl-L-methionine = (sulfur carrier)-H + biotin + 2 5'-deoxyadenosine + 2 L-methionine + 2 oxidized [2Fe-2S]-[ferredoxin]. It functions in the pathway cofactor biosynthesis; biotin biosynthesis; biotin from 7,8-diaminononanoate: step 2/2. Its function is as follows. Catalyzes the conversion of dethiobiotin (DTB) to biotin by the insertion of a sulfur atom into dethiobiotin via a radical-based mechanism. The polypeptide is Biotin synthase (Helicobacter pylori (strain J99 / ATCC 700824) (Campylobacter pylori J99)).